We begin with the raw amino-acid sequence, 90 residues long: MSILSSLISISNPMKSSKSSVANGGGSSLSMGSNSIACGSCGSNGGNGRKRLPSDYTNIDSNAGSYTTASGSTYSYSYSYGYYSGSCGCN.

The protein belongs to the hssA/B family.

This Dictyostelium discoideum (Social amoeba) protein is HssA/B-like protein 4 (hssl4).